Consider the following 119-residue polypeptide: Large ribosomal subunit protein uL22 (119 aa).

It belongs to the universal ribosomal protein uL22 family. Part of the 50S ribosomal subunit.

Functionally, this protein binds specifically to 23S rRNA; its binding is stimulated by other ribosomal proteins, e.g. L4, L17, and L20. It is important during the early stages of 50S assembly. It makes multiple contacts with different domains of the 23S rRNA in the assembled 50S subunit and ribosome. Its function is as follows. The globular domain of the protein is located near the polypeptide exit tunnel on the outside of the subunit, while an extended beta-hairpin is found that lines the wall of the exit tunnel in the center of the 70S ribosome. The chain is Large ribosomal subunit protein uL22 from Rickettsia conorii (strain ATCC VR-613 / Malish 7).